A 382-amino-acid chain; its full sequence is Intermediate transcription factor 3 large subunit (382 aa).

This sequence belongs to the poxviruses A23 family. In terms of assembly, heterodimer of a 45 kDa and a 32 kDa subunit.

Functionally, acts with RNA polymerase to initiate transcription from intermediate gene promoters. In Monkeypox virus (strain Zaire-96-I-16) (MPX), this protein is Intermediate transcription factor 3 large subunit (VITF3L).